We begin with the raw amino-acid sequence, 294 residues long: 4-hydroxy-tetrahydrodipicolinate synthase (294 aa).

A pyruvate-binding site is contributed by Thr47. The active-site Proton donor/acceptor is Tyr136. The active-site Schiff-base intermediate with substrate is Lys164. Val206 contributes to the pyruvate binding site.

Belongs to the DapA family. In terms of assembly, homotetramer; dimer of dimers.

Its subcellular location is the cytoplasm. It carries out the reaction L-aspartate 4-semialdehyde + pyruvate = (2S,4S)-4-hydroxy-2,3,4,5-tetrahydrodipicolinate + H2O + H(+). It participates in amino-acid biosynthesis; L-lysine biosynthesis via DAP pathway; (S)-tetrahydrodipicolinate from L-aspartate: step 3/4. Catalyzes the condensation of (S)-aspartate-beta-semialdehyde [(S)-ASA] and pyruvate to 4-hydroxy-tetrahydrodipicolinate (HTPA). This chain is 4-hydroxy-tetrahydrodipicolinate synthase, found in Cyanothece sp. (strain PCC 7425 / ATCC 29141).